The chain runs to 420 residues: Serine hydroxymethyltransferase (420 aa).

(6S)-5,6,7,8-tetrahydrofolate is bound by residues L123 and 127-129 (GHL). N6-(pyridoxal phosphate)lysine is present on K232.

It belongs to the SHMT family. In terms of assembly, homodimer. It depends on pyridoxal 5'-phosphate as a cofactor.

Its subcellular location is the cytoplasm. The catalysed reaction is (6R)-5,10-methylene-5,6,7,8-tetrahydrofolate + glycine + H2O = (6S)-5,6,7,8-tetrahydrofolate + L-serine. It functions in the pathway one-carbon metabolism; tetrahydrofolate interconversion. The protein operates within amino-acid biosynthesis; glycine biosynthesis; glycine from L-serine: step 1/1. Functionally, catalyzes the reversible interconversion of serine and glycine with tetrahydrofolate (THF) serving as the one-carbon carrier. This reaction serves as the major source of one-carbon groups required for the biosynthesis of purines, thymidylate, methionine, and other important biomolecules. Also exhibits THF-independent aldolase activity toward beta-hydroxyamino acids, producing glycine and aldehydes, via a retro-aldol mechanism. The protein is Serine hydroxymethyltransferase of Ehrlichia chaffeensis (strain ATCC CRL-10679 / Arkansas).